A 447-amino-acid chain; its full sequence is Tubulin beta chain (447 aa).

Q11, E69, S138, G142, T143, G144, N204, and N226 together coordinate GTP. Residue E69 participates in Mg(2+) binding. Residues 424 to 447 (QYQEASVSEGEEEYDEEAPLEGEE) are disordered. A compositionally biased stretch (acidic residues) spans 432 to 447 (EGEEEYDEEAPLEGEE).

This sequence belongs to the tubulin family. Dimer of alpha and beta chains. A typical microtubule is a hollow water-filled tube with an outer diameter of 25 nm and an inner diameter of 15 nM. Alpha-beta heterodimers associate head-to-tail to form protofilaments running lengthwise along the microtubule wall with the beta-tubulin subunit facing the microtubule plus end conferring a structural polarity. Microtubules usually have 13 protofilaments but different protofilament numbers can be found in some organisms and specialized cells. The cofactor is Mg(2+).

It is found in the cytoplasm. The protein localises to the cytoskeleton. Its function is as follows. Tubulin is the major constituent of microtubules, a cylinder consisting of laterally associated linear protofilaments composed of alpha- and beta-tubulin heterodimers. Microtubules grow by the addition of GTP-tubulin dimers to the microtubule end, where a stabilizing cap forms. Below the cap, tubulin dimers are in GDP-bound state, owing to GTPase activity of alpha-tubulin. The sequence is that of Tubulin beta chain (TUB1) from Cercospora beticola (Sugarbeet leaf spot fungus).